Consider the following 379-residue polypeptide: Carbamoyl phosphate synthase small chain (379 aa).

Residues 1-184 (MVSLYLENGL…LDYKPFDEKN (184 aa)) form a CPSase region. L-glutamine contacts are provided by Ser-44, Gly-240, and Gly-242. Residues 188-378 (TIAVLDFGAK…VKLLENFPTR (191 aa)) enclose the Glutamine amidotransferase type-1 domain. Cys-268 acts as the Nucleophile in catalysis. Leu-269, Gln-272, Asn-310, and Tyr-313 together coordinate L-glutamine. Active-site residues include His-351 and Glu-353.

The protein belongs to the CarA family. As to quaternary structure, composed of two chains; the small (or glutamine) chain promotes the hydrolysis of glutamine to ammonia, which is used by the large (or ammonia) chain to synthesize carbamoyl phosphate. Tetramer of heterodimers (alpha,beta)4.

The catalysed reaction is hydrogencarbonate + L-glutamine + 2 ATP + H2O = carbamoyl phosphate + L-glutamate + 2 ADP + phosphate + 2 H(+). It catalyses the reaction L-glutamine + H2O = L-glutamate + NH4(+). Its pathway is amino-acid biosynthesis; L-arginine biosynthesis; carbamoyl phosphate from bicarbonate: step 1/1. The protein operates within pyrimidine metabolism; UMP biosynthesis via de novo pathway; (S)-dihydroorotate from bicarbonate: step 1/3. Functionally, small subunit of the glutamine-dependent carbamoyl phosphate synthetase (CPSase). CPSase catalyzes the formation of carbamoyl phosphate from the ammonia moiety of glutamine, carbonate, and phosphate donated by ATP, constituting the first step of 2 biosynthetic pathways, one leading to arginine and/or urea and the other to pyrimidine nucleotides. The small subunit (glutamine amidotransferase) binds and cleaves glutamine to supply the large subunit with the substrate ammonia. The polypeptide is Carbamoyl phosphate synthase small chain (Helicobacter acinonychis (strain Sheeba)).